The sequence spans 262 residues: 3-dehydro-D-guloside 4-epimerase (262 aa).

The active-site Proton donor/acceptor is Glu146. Mn(2+) is bound by residues Glu146 and Asp179. A substrate-binding site is contributed by His182. Residue His205 coordinates Mn(2+). Arg211 lines the substrate pocket. Glu240 (proton donor/acceptor) is an active-site residue. Glu240 contacts Mn(2+).

Belongs to the hyi family. The cofactor is Mn(2+).

The catalysed reaction is a 3-dehydro-D-guloside = a 3-dehydro-D-glucoside. Functionally, catalyzes the epimerization at C4 of 3-dehydro-D-gulosides leading to 3-dehydro-D-glucosides. Probably functions in a metabolic pathway that transforms D-gulosides to D-glucosides. Can use methyl alpha-3-dehydro-D-glucoside and methyl beta-3-dehydro-D-glucoside as substrates in vitro. However, the actual specific physiological substrates for this metabolic pathway are unknown. Cannot act on D-psicose, D-fructose, D-tagatose, D-sorbose, L-xylulose, or L-ribulose. This Escherichia coli (strain K12) protein is 3-dehydro-D-guloside 4-epimerase (ycjR).